A 58-amino-acid chain; its full sequence is MAVPKRKKSKSRRNMHRSHLALSAANVVIDPTTGEYKLPHHVCLGGYYNGKQVTESKV.

This sequence belongs to the bacterial ribosomal protein bL32 family.

This Anaplasma marginale (strain Florida) protein is Large ribosomal subunit protein bL32.